Here is a 539-residue protein sequence, read N- to C-terminus: Phosphoenolpyruvate carboxykinase (ATP) (539 aa).

The substrate site is built by R59, Y200, and K206. ATP contacts are provided by residues K206, H225, and G242 to T250. 2 residues coordinate Mn(2+): K206 and H225. D263 is a Mn(2+) binding site. Residues E291, R327, R447 to I448, and T453 contribute to the ATP site. Position 327 (R327) interacts with substrate.

The protein belongs to the phosphoenolpyruvate carboxykinase (ATP) family. The cofactor is Mn(2+).

The protein localises to the cytoplasm. It carries out the reaction oxaloacetate + ATP = phosphoenolpyruvate + ADP + CO2. It functions in the pathway carbohydrate biosynthesis; gluconeogenesis. Functionally, involved in the gluconeogenesis. Catalyzes the conversion of oxaloacetate (OAA) to phosphoenolpyruvate (PEP) through direct phosphoryl transfer between the nucleoside triphosphate and OAA. This is Phosphoenolpyruvate carboxykinase (ATP) from Selenomonas ruminantium.